We begin with the raw amino-acid sequence, 243 residues long: Pyridoxine 5'-phosphate synthase (243 aa).

Residue Asn-9 participates in 3-amino-2-oxopropyl phosphate binding. A 1-deoxy-D-xylulose 5-phosphate-binding site is contributed by 11–12 (DH). Arg-20 is a 3-amino-2-oxopropyl phosphate binding site. The active-site Proton acceptor is the His-45. Positions 47 and 52 each coordinate 1-deoxy-D-xylulose 5-phosphate. Glu-72 functions as the Proton acceptor in the catalytic mechanism. Thr-102 is a 1-deoxy-D-xylulose 5-phosphate binding site. His-193 acts as the Proton donor in catalysis. 3-amino-2-oxopropyl phosphate contacts are provided by residues Gly-194 and 215–216 (GH).

It belongs to the PNP synthase family. As to quaternary structure, homooctamer; tetramer of dimers.

It localises to the cytoplasm. It catalyses the reaction 3-amino-2-oxopropyl phosphate + 1-deoxy-D-xylulose 5-phosphate = pyridoxine 5'-phosphate + phosphate + 2 H2O + H(+). It functions in the pathway cofactor biosynthesis; pyridoxine 5'-phosphate biosynthesis; pyridoxine 5'-phosphate from D-erythrose 4-phosphate: step 5/5. Catalyzes the complicated ring closure reaction between the two acyclic compounds 1-deoxy-D-xylulose-5-phosphate (DXP) and 3-amino-2-oxopropyl phosphate (1-amino-acetone-3-phosphate or AAP) to form pyridoxine 5'-phosphate (PNP) and inorganic phosphate. This is Pyridoxine 5'-phosphate synthase from Pseudoalteromonas translucida (strain TAC 125).